The following is a 360-amino-acid chain: Probable mannan endo-1,4-beta-mannosidase A (360 aa).

The N-terminal stretch at 1–18 (MKLSQILTFASLLSGALA) is a signal peptide. Positions 142 and 178 each coordinate substrate. Glutamate 179 (proton donor) is an active-site residue. Residue tyrosine 254 coordinates substrate. The Nucleophile role is filled by glutamate 287. The N-linked (GlcNAc...) asparagine glycan is linked to asparagine 307. Tryptophan 317 is a substrate binding site.

This sequence belongs to the glycosyl hydrolase 5 (cellulase A) family.

Its subcellular location is the secreted. The catalysed reaction is Random hydrolysis of (1-&gt;4)-beta-D-mannosidic linkages in mannans, galactomannans and glucomannans.. In terms of biological role, endo-1,4-mannanase, a crucial enzyme for depolymerization of seed galactomannans and wood galactoglucomannans. The chain is Probable mannan endo-1,4-beta-mannosidase A (manA) from Aspergillus clavatus (strain ATCC 1007 / CBS 513.65 / DSM 816 / NCTC 3887 / NRRL 1 / QM 1276 / 107).